The sequence spans 212 residues: MDIGSIRHDFTEHPPLLEQDLAADPIEQFAAWFQYAVDSGISEPNGFVLATVAADGQPSQRSVLLKLFDEEGFVFYTNYSSQKAEEIEKNAQVSMSFPWYALQRQIHVYGRAEKIPREQSLAYFLTRPQGSQIGAWASPQSKIIESRDFLMLKWQNMKAKFHEGKIPLPDFWGGYRVRPHKIEFWQGQPSRLHDRFLYEKTENGWTVSRRAP.

FMN contacts are provided by residues 61–66, 76–77, lysine 83, and glutamine 105; these read RSVLLK and YT. A substrate-binding site is contributed by lysine 66. Residues tyrosine 123, arginine 127, and serine 131 each coordinate substrate. FMN is bound by residues 140 to 141 and tryptophan 185; that span reads QS. 191-193 serves as a coordination point for substrate; the sequence is RLH. Arginine 195 is a binding site for FMN.

It belongs to the pyridoxamine 5'-phosphate oxidase family. As to quaternary structure, homodimer. It depends on FMN as a cofactor.

It carries out the reaction pyridoxamine 5'-phosphate + O2 + H2O = pyridoxal 5'-phosphate + H2O2 + NH4(+). The enzyme catalyses pyridoxine 5'-phosphate + O2 = pyridoxal 5'-phosphate + H2O2. It participates in cofactor metabolism; pyridoxal 5'-phosphate salvage; pyridoxal 5'-phosphate from pyridoxamine 5'-phosphate: step 1/1. The protein operates within cofactor metabolism; pyridoxal 5'-phosphate salvage; pyridoxal 5'-phosphate from pyridoxine 5'-phosphate: step 1/1. Its function is as follows. Catalyzes the oxidation of either pyridoxine 5'-phosphate (PNP) or pyridoxamine 5'-phosphate (PMP) into pyridoxal 5'-phosphate (PLP). In Dichelobacter nodosus (strain VCS1703A), this protein is Pyridoxine/pyridoxamine 5'-phosphate oxidase.